Here is a 172-residue protein sequence, read N- to C-terminus: C-phycocyanin beta chain (172 aa).

Asn-72 bears the N4-methylasparagine mark. (2R,3E)-phycocyanobilin-binding residues include Cys-82 and Cys-153.

It belongs to the phycobiliprotein family. In terms of assembly, heterodimer of an alpha and a beta subunit, which further assembles into trimers and the trimers into hexamers. The basic functional unit of phycobiliproteins is a ring-shaped hexamer formed from two back-to-back trimers contacting via the alpha chain subunits. The trimers are composed of alpha/beta subunit heterodimers arranged around a three-fold axis of symmetry. The phycoerythrins also contain a gamma subunit which is located in the center of the hexamer. Post-translationally, contains two covalently linked bilin chromophores.

The protein resides in the plastid. The protein localises to the chloroplast thylakoid membrane. In terms of biological role, light-harvesting photosynthetic bile pigment-protein from the phycobiliprotein complex (phycobilisome, PBS). Phycocyanin is the major phycobiliprotein in the PBS rod. In Pyropia yezoensis (Susabi-nori), this protein is C-phycocyanin beta chain (cpcB).